The sequence spans 252 residues: D-aminoacyl-tRNA deacylase (252 aa).

Belongs to the DtdA deacylase family. As to quaternary structure, monomer. It depends on Zn(2+) as a cofactor.

It carries out the reaction a D-aminoacyl-tRNA + H2O = a tRNA + a D-alpha-amino acid + H(+). It catalyses the reaction glycyl-tRNA(Ala) + H2O = tRNA(Ala) + glycine + H(+). In terms of biological role, D-aminoacyl-tRNA deacylase with broad substrate specificity. By recycling D-aminoacyl-tRNA to D-amino acids and free tRNA molecules, this enzyme counteracts the toxicity associated with the formation of D-aminoacyl-tRNA entities in vivo. This chain is D-aminoacyl-tRNA deacylase, found in Pyrobaculum islandicum (strain DSM 4184 / JCM 9189 / GEO3).